A 520-amino-acid polypeptide reads, in one-letter code: Chaperone Ric-8B (520 aa).

S468 is modified (phosphoserine). T473 is modified (phosphothreonine).

It belongs to the synembryn family. Interacts with GDP-bound G(s) G-alpha proteins GNAL and GNAS. Does not interact with G-alpha proteins when they are in complex with subunits beta and gamma. In terms of tissue distribution, predominantly expressed in the mature olfactory sensory neurons and also in a few regions in the brain.

The protein localises to the cytoplasm. Its subcellular location is the cell cortex. Functionally, chaperone that specifically binds and folds nascent G(s) G-alpha proteins (GNAS and GNAL) prior to G protein heterotrimer formation, promoting their association with the plasma membrane. Also acts as a guanine nucleotide exchange factor (GEF) for G(s) proteins by stimulating exchange of bound GDP for free GTP. Acts as an important component for odorant signal transduction by mediating GNAL (G(olf)-alpha) folding, thereby promoting-dependent cAMP accumulation in olfactory sensory neurons. This chain is Chaperone Ric-8B, found in Mus musculus (Mouse).